The chain runs to 248 residues: Proteasome subunit alpha (248 aa).

Ser-2 carries the post-translational modification N-acetylserine; partial.

The protein belongs to the peptidase T1A family. In terms of assembly, the 20S proteasome core is composed of 14 alpha and 14 beta subunits that assemble into four stacked heptameric rings, resulting in a barrel-shaped structure. The two inner rings, each composed of seven catalytic beta subunits, are sandwiched by two outer rings, each composed of seven alpha subunits. The catalytic chamber with the active sites is on the inside of the barrel. Has a gated structure, the ends of the cylinder being occluded by the N-termini of the alpha-subunits. Is capped by the proteasome-associated ATPase, ARC.

The protein resides in the cytoplasm. It functions in the pathway protein degradation; proteasomal Pup-dependent pathway. The formation of the proteasomal ATPase ARC-20S proteasome complex, likely via the docking of the C-termini of ARC into the intersubunit pockets in the alpha-rings, may trigger opening of the gate for substrate entry. Interconversion between the open-gate and close-gate conformations leads to a dynamic regulation of the 20S proteasome proteolysis activity. Component of the proteasome core, a large protease complex with broad specificity involved in protein degradation. In Mycobacterium tuberculosis (strain CDC 1551 / Oshkosh), this protein is Proteasome subunit alpha.